The following is a 652-amino-acid chain: Acetyl-coenzyme A synthetase (652 aa).

Residues 191–194 (RAGR), T311, and N335 each bind CoA. ATP contacts are provided by residues 387–389 (GEP), 411–416 (DTWWQT), D500, and R515. Position 523 (S523) interacts with CoA. R526 serves as a coordination point for ATP. Positions 537, 539, and 542 each coordinate Mg(2+). Residue R584 coordinates CoA. Residue K609 is modified to N6-acetyllysine.

This sequence belongs to the ATP-dependent AMP-binding enzyme family. The cofactor is Mg(2+). In terms of processing, acetylated. Deacetylation by the SIR2-homolog deacetylase activates the enzyme.

It carries out the reaction acetate + ATP + CoA = acetyl-CoA + AMP + diphosphate. Catalyzes the conversion of acetate into acetyl-CoA (AcCoA), an essential intermediate at the junction of anabolic and catabolic pathways. Acs undergoes a two-step reaction. In the first half reaction, Acs combines acetate with ATP to form acetyl-adenylate (AcAMP) intermediate. In the second half reaction, it can then transfer the acetyl group from AcAMP to the sulfhydryl group of CoA, forming the product AcCoA. In terms of biological role, enables the cell to use acetate during aerobic growth to generate energy via the TCA cycle, and biosynthetic compounds via the glyoxylate shunt. Acetylates CheY, the response regulator involved in flagellar movement and chemotaxis. The polypeptide is Acetyl-coenzyme A synthetase (Salmonella typhi).